The chain runs to 103 residues: Endoribonuclease MazF3 (103 aa).

The protein belongs to the PemK/MazF family. Forms a complex with cognate antitoxin MazE3.

Functionally, toxic component of a type II toxin-antitoxin (TA) system. Acts as an endoribonuclease, cleaving in U-rich regions. Neutralized by cognate antitoxin MazE3. In Mycobacterium tuberculosis (strain CDC 1551 / Oshkosh), this protein is Endoribonuclease MazF3 (mazF3).